The following is a 658-amino-acid chain: NADH-ubiquinone oxidoreductase chain 5 (658 aa).

The next 17 membrane-spanning stretches (helical) occupy residues 4–23 (TLIV…GRKI), 30–52 (IITC…EVGI), 81–103 (LTVS…SISY), 112–129 (RFFS…ILVT), 133–155 (YLLM…NFWF), 168–190 (LLTN…WSFG), 200–222 (LAPY…GATA), 243–262 (VSAL…LLMR), 272–294 (TVLI…IGLF), 301–319 (VIAY…GIGL), 329–351 (LVNH…HSVA), 364–386 (PFLP…VPFM), 409–431 (IVYF…VLYL), 452–471 (LFLN…FGFL), 505–527 (VPVL…SILY), 607–629 (LSTG…YIST), and 639–656 (LLIL…NKLL).

The protein belongs to the complex I subunit 5 family.

It localises to the mitochondrion inner membrane. It catalyses the reaction a ubiquinone + NADH + 5 H(+)(in) = a ubiquinol + NAD(+) + 4 H(+)(out). In terms of biological role, core subunit of the mitochondrial membrane respiratory chain NADH dehydrogenase (Complex I) that is believed to belong to the minimal assembly required for catalysis. Complex I functions in the transfer of electrons from NADH to the respiratory chain. The immediate electron acceptor for the enzyme is believed to be ubiquinone. The chain is NADH-ubiquinone oxidoreductase chain 5 (nad5) from Talaromyces marneffei (Penicillium marneffei).